Here is a 535-residue protein sequence, read N- to C-terminus: MGNACRGSFGGKTFQGYPQPQDHSESNSNPKHNSDSPKPKKEQQPLVTMNRTSTNQSYYVLGHKTPNIRDLYTLGRKLGQGQFGTTYLCTELSSGIDYACKSIAKRKLISKEDVEDVRREIQIMHHLAGHKNIVSIKGAYEDPLYVHIVMELCGGGELFDRIIQRGHYTERKAADLTKIIVGVVEACHSLGVMHRDLKPENFLLVNKDDDFSLKAIDFGLSVFFKPGQIFTDVVGSPYYVAPEVLLKHYGPEADVWTAGVILYILLSGVPPFWAETQQGIFDAVLKGHIDFDSDPWPLLSESAKDLIRKMLCMRPSERLTAHEVLCHPWICENGVAPDRALDPAVLSRLKHFSAMNKLKKMALRVIAESLSEEEIAGLKEMFKAMDTDNSGAITFDELKAGLRKYGSTLKDIEIRELMDAADVDNSGTIDYGEFIAATIHLNKLDREEHLMAAFQYFDKDGSGYITVDELQQACADHNITDVFFEDIIREVDQDNDGRIDYGEFVAMMQKGNPCIGRRTMRNSLNFSMRDAPGAH.

The disordered stretch occupies residues 1 to 46 (MGNACRGSFGGKTFQGYPQPQDHSESNSNPKHNSDSPKPKKEQQPL). The N-myristoyl glycine moiety is linked to residue Gly2. The S-palmitoyl cysteine moiety is linked to residue Cys5. The segment covering 32–43 (HNSDSPKPKKEQ) has biased composition (basic and acidic residues). Positions 72-330 (YTLGRKLGQG…AHEVLCHPWI (259 aa)) constitute a Protein kinase domain. Residues 78 to 86 (LGQGQFGTT) and Lys101 contribute to the ATP site. The active-site Proton acceptor is Asp196. The segment at 336–366 (APDRALDPAVLSRLKHFSAMNKLKKMALRVI) is autoinhibitory domain. 4 consecutive EF-hand domains span residues 373-408 (EEIA…YGST), 409-444 (LKDI…LNKL), 445-480 (DREE…HNIT), and 484-514 (FEDI…GNPC). Ca(2+) contacts are provided by Asp386, Asp388, Ser390, Glu397, Asp422, Asp424, Ser426, Thr428, Glu433, Asp458, Asp460, Ser462, Tyr464, Glu469, Asp492, Asp494, Asp496, Arg498, and Glu503.

It belongs to the protein kinase superfamily. Ser/Thr protein kinase family. CDPK subfamily.

The protein resides in the cell membrane. It carries out the reaction L-seryl-[protein] + ATP = O-phospho-L-seryl-[protein] + ADP + H(+). The enzyme catalyses L-threonyl-[protein] + ATP = O-phospho-L-threonyl-[protein] + ADP + H(+). Activated by calcium. Autophosphorylation may play an important role in the regulation of the kinase activity. In terms of biological role, regulates the production of reactive oxygen species (ROS) by NADPH oxidase. This is Calcium-dependent protein kinase 5 (CPK5) from Solanum tuberosum (Potato).